The following is an 84-amino-acid chain: Toxin Ts4 (84 aa).

The N-terminal stretch at 1–19 (MKRMILFISCLLLIDIVVG) is a signal peptide. The LCN-type CS-alpha/beta domain occupies 21-82 (REGYPADSKG…IWTSETNKCG (62 aa)). 4 cysteine pairs are disulfide-bonded: C31–C81, C35–C57, C43–C62, and C47–C64. C81 is modified (cysteine amide). A propeptide spanning residues 82–84 (GKK) is cleaved from the precursor.

The protein belongs to the long (4 C-C) scorpion toxin superfamily. Sodium channel inhibitor family. Alpha subfamily. As to expression, expressed by the venom gland.

The protein localises to the secreted. Functionally, not toxic. Induces an immune response similar to that induced by whole venom. Induces a dose dependent release of the neurotransmitters glutamic acid and gamma aminobutyric acid from rat brain synaptosomes. Thus, polyclonal antibodies raised against this protein can neutralize the effects of the venom. This is Toxin Ts4 from Tityus serrulatus (Brazilian scorpion).